A 164-amino-acid polypeptide reads, in one-letter code: uncharacterized protein (164 aa).

At Ser-117 the chain carries Phosphoserine.

This is an uncharacterized protein from Bacillus subtilis (strain 168).